The primary structure comprises 1052 residues: Kruppel-like factor 18 (1052 aa).

3 C2H2-type zinc fingers span residues 964–988, 994–1018, and 1024–1046; these read YVCTYEDCKMSYSKACHLRTHMRKH, YVCDVEGCTWKFARSDELNRHKKRH, and YLCSICSKNFARSDHLKQHAKVH.

The protein belongs to the krueppel C2H2-type zinc-finger protein family.

The protein localises to the nucleus. The sequence is that of Kruppel-like factor 18 from Homo sapiens (Human).